Reading from the N-terminus, the 481-residue chain is uncharacterized protein (481 aa).

The next 11 helical transmembrane spans lie at 14 to 34 (LGFC…GIFL), 46 to 66 (FAPM…IVFA), 90 to 110 (IGIY…GVLA), 134 to 154 (FSVK…INLF), 167 to 187 (TVGK…IITT), 218 to 238 (FSSM…FESI), 258 to 278 (IAIF…MLLG), 303 to 323 (IIVV…SFGA), 377 to 397 (LAVI…IALA), 411 to 431 (AFTD…LAVS), and 446 to 466 (YFSI…AYLH).

It belongs to the amino acid-polyamine-organocation (APC) superfamily.

It is found in the cell membrane. Probable amino-acid or metabolite transport protein. This is an uncharacterized protein from Mycobacterium bovis (strain ATCC BAA-935 / AF2122/97).